The following is a 188-amino-acid chain: UPF0200 protein M1627_1244 (188 aa).

15–22 (GMPGSGKS) serves as a coordination point for ATP.

The protein belongs to the UPF0200 family.

The chain is UPF0200 protein M1627_1244 from Saccharolobus islandicus (strain M.16.27) (Sulfolobus islandicus).